We begin with the raw amino-acid sequence, 827 residues long: SID1 transmembrane family member 1 (827 aa).

An N-terminal signal peptide occupies residues 1 to 19 (MLDCLRLALLCALPWLLRA). Residues 20-309 (AVPGHQEEPL…SIKESVYVKS (290 aa)) are Extracellular-facing. N67, N83, N136, and N282 each carry an N-linked (GlcNAc...) asparagine glycan. A helical transmembrane segment spans residues 310 to 330 (SLFSIFVFLSFYLGCLLVVLV). Topologically, residues 331–442 (HHVRFQRKSI…DRRIVSKKYK (112 aa)) are cytoplasmic. The tract at residues 344-409 (FGSSDGSGNM…VEESDFDTMP (66 aa)) is disordered. Over residues 375-386 (SSSSPGRQMSSS) the composition is skewed to low complexity. Positions 398 to 409 (SSVEESDFDTMP) are enriched in acidic residues. Residues 443–463 (IYFWNIITIAVFYALPVMQLV) form a helical membrane-spanning segment. At 464–494 (ITYQTVVNVTGNQDICYYNFLCAHPLGVLSA) the chain is on the extracellular side. Residue N471 is glycosylated (N-linked (GlcNAc...) asparagine). Residues 495-515 (FNNILSNLGHVLLGFLFLLIV) form a helical membrane-spanning segment. The Cytoplasmic segment spans residues 516–541 (LRRDLLHRRALEAKDIFAMEYGIPKH). A helical membrane pass occupies residues 542–562 (FGLFYAMGIALMMEGVLSACY). Residues 563-572 (HVCPNYSNFQ) lie on the Extracellular side of the membrane. N567 is a glycosylation site (N-linked (GlcNAc...) asparagine). A helical membrane pass occupies residues 573-590 (FDTSFMYMIAGLCMLKLY). Residues 591–600 (QTRHPDINAS) lie on the Cytoplasmic side of the membrane. A helical membrane pass occupies residues 601–621 (AYSAYASFAVVITLTVLGVVF). At 622 to 626 (GKNDV) the chain is on the extracellular side. The helical transmembrane segment at 627–647 (WFWIIFSAIHILSSLALSTQI) threads the bilayer. Over 648–683 (YYMGRFKIDLGIFRRAAMVFYTDCIQQCSRPLYMDR) the chain is Cytoplasmic. Residues 684–704 (MVLLIVGNLVNWSFAFFGLIY) form a helical membrane-spanning segment. The Extracellular segment spans residues 705–710 (RPRDFA). Residues 711 to 731 (SYMLGIFICNLLLYLAFYIIM) traverse the membrane as a helical segment. The Cytoplasmic portion of the chain corresponds to 732-741 (KLRSSEKVLP). A helical transmembrane segment spans residues 742–762 (LPVFCIAATAVVWAAALYFFF). The Extracellular portion of the chain corresponds to 763 to 791 (QNLSSWEGTPAESREKNRECVLLDFFDDH). N764 carries an N-linked (GlcNAc...) asparagine glycan. A helical transmembrane segment spans residues 792 to 812 (DIWHFLSATALFFSFLVLLTL). At 813 to 827 (DDDLDVVRRDQIPVF) the chain is on the cytoplasmic side.

The protein belongs to the SID1 family.

It localises to the membrane. In vitro binds long double-stranded RNA (dsRNA) (500 and 700 base pairs), but not dsRNA shorter than 300 bp. Not involved in RNA autophagy, a process in which RNA is directly imported into lysosomes in an ATP-dependent manner, and degraded. The protein is SID1 transmembrane family member 1 (Sidt1) of Mus musculus (Mouse).